The sequence spans 95 residues: Protein TusB (95 aa).

Belongs to the DsrH/TusB family. As to quaternary structure, heterohexamer, formed by a dimer of trimers. The hexameric TusBCD complex contains 2 copies each of TusB, TusC and TusD. The TusBCD complex interacts with TusE.

Its subcellular location is the cytoplasm. Part of a sulfur-relay system required for 2-thiolation of 5-methylaminomethyl-2-thiouridine (mnm(5)s(2)U) at tRNA wobble positions. This chain is Protein TusB, found in Escherichia coli (strain SMS-3-5 / SECEC).